The following is a 631-amino-acid chain: Chaperone protein DnaK (631 aa).

Position 197 is a phosphothreonine; by autocatalysis (T197). Residues 599–631 (AQSDAGAAGSASEENTTSNEKVVDADFEDVEKK) form a disordered region. A compositionally biased stretch (low complexity) spans 603–612 (AGAAGSASEE).

It belongs to the heat shock protein 70 family.

Acts as a chaperone. The sequence is that of Chaperone protein DnaK from Rickettsia bellii (strain RML369-C).